The sequence spans 387 residues: Alpha-maltose-1-phosphate synthase (387 aa).

The protein belongs to the glycosyltransferase group 1 family.

It catalyses the reaction ADP-alpha-D-glucose + alpha-D-glucose 1-phosphate = alpha-maltose 1-phosphate + ADP + H(+). It participates in glycan biosynthesis; glycogen biosynthesis. Involved in the biosynthesis of the maltose-1-phosphate (M1P) building block required for alpha-glucan production by the key enzyme GlgE. Catalyzes the formation of an alpha-1,4 linkage between glucose from ADP-glucose and glucose 1-phosphate (G1P) to yield maltose-1-phosphate (M1P). In Mycolicibacterium smegmatis (strain ATCC 700084 / mc(2)155) (Mycobacterium smegmatis), this protein is Alpha-maltose-1-phosphate synthase.